Consider the following 139-residue polypeptide: ATP synthase epsilon chain (139 aa).

Belongs to the ATPase epsilon chain family. As to quaternary structure, F-type ATPases have 2 components, CF(1) - the catalytic core - and CF(0) - the membrane proton channel. CF(1) has five subunits: alpha(3), beta(3), gamma(1), delta(1), epsilon(1). CF(0) has three main subunits: a, b and c.

It localises to the cell membrane. Produces ATP from ADP in the presence of a proton gradient across the membrane. The polypeptide is ATP synthase epsilon chain (Streptococcus sanguinis).